A 70-amino-acid chain; its full sequence is Large ribosomal subunit protein eL38 (70 aa).

It belongs to the eukaryotic ribosomal protein eL38 family.

This chain is Large ribosomal subunit protein eL38 (RpL38), found in Plutella xylostella (Diamondback moth).